Reading from the N-terminus, the 364-residue chain is FK506-binding protein 4 (364 aa).

2 disordered regions span residues 92 to 148 (SMFG…DDEI) and 168 to 239 (EADK…PTKP). Acidic residues predominate over residues 94–148 (FGDDEHGEDEDNEEEEGEEGEDEEMEGEDEDEDEEDEDEEDEDEEEEDDEEDDEI). Residues 168-184 (EADKNKQQKKPKQEEPV) are compositionally biased toward basic and acidic residues. A compositionally biased stretch (low complexity) spans 185–239 (KQVTPVKPTAQAAKPTAATTTTTTTTTTTPTKQTTPAKPAAKPVTPTKPVTPTKP). One can recognise a PPIase FKBP-type domain in the interval 277 to 363 (GKKVGVKYIG…IFDVELVSCA (87 aa)).

Belongs to the FKBP-type PPIase family. As to quaternary structure, binds to histones H3 and H4.

Its subcellular location is the nucleus. It catalyses the reaction [protein]-peptidylproline (omega=180) = [protein]-peptidylproline (omega=0). With respect to regulation, inhibited by both FK506 and rapamycin. In terms of biological role, PPIase that acts as a histone chaperone. Histone proline isomerase that increases the rate of cis-trans isomerization at prolines on the histone H3 N-terminal tail. Proline isomerization influences H3 methylation thereby regulating gene expression. The protein is FK506-binding protein 4 (fkbp4) of Dictyostelium discoideum (Social amoeba).